We begin with the raw amino-acid sequence, 64 residues long: Leader peptide SpeFL (64 aa).

The short motif at 32–38 is the Ornithine recognition loop element; it reads HIRRTRH. L-ornithine is bound at residue Arg-35.

This sequence belongs to the speF operon leader peptide family. Binds ornithine in stalled 70S ribosomes, blocking the upper two-thirds of the exit tunnel. Contacts 23S rRNA and ribosomal proteins L4 and L22.

Its function is as follows. A small protein (arrest peptide) encoded upstream of inducible ornithine carboxylase gene (speF) that controls expression of downstream genes (usually speF and potE) by transcriptional and translational attenuation. The polypeptide is Leader peptide SpeFL (Haemophilus influenzae (strain ATCC 51907 / DSM 11121 / KW20 / Rd)).